We begin with the raw amino-acid sequence, 176 residues long: Cytochrome b (176 aa).

Transmembrane regions (helical) follow at residues 33 to 53, 77 to 98, and 113 to 133; these read FGSLLGICLAVQILTGLFLAM, WLLRYLHANGASMFFICLYLHI, and WNVGVILLFAVMATAFMGYVL. Residues histidine 83 and histidine 97 each contribute to the heme b site.

It belongs to the cytochrome b family. The cytochrome bc1 complex contains 11 subunits: 3 respiratory subunits (MT-CYB, CYC1 and UQCRFS1), 2 core proteins (UQCRC1 and UQCRC2) and 6 low-molecular weight proteins (UQCRH/QCR6, UQCRB/QCR7, UQCRQ/QCR8, UQCR10/QCR9, UQCR11/QCR10 and a cleavage product of UQCRFS1). This cytochrome bc1 complex then forms a dimer. Requires heme b as cofactor.

It localises to the mitochondrion inner membrane. Component of the ubiquinol-cytochrome c reductase complex (complex III or cytochrome b-c1 complex) that is part of the mitochondrial respiratory chain. The b-c1 complex mediates electron transfer from ubiquinol to cytochrome c. Contributes to the generation of a proton gradient across the mitochondrial membrane that is then used for ATP synthesis. This chain is Cytochrome b (MT-CYB), found in Eumops glaucinus (Wagner's mastiff bat).